The primary structure comprises 155 residues: Ribosome maturation factor RimP (155 aa).

This sequence belongs to the RimP family.

It localises to the cytoplasm. In terms of biological role, required for maturation of 30S ribosomal subunits. This is Ribosome maturation factor RimP from Agathobacter rectalis (strain ATCC 33656 / DSM 3377 / JCM 17463 / KCTC 5835 / VPI 0990) (Eubacterium rectale).